A 206-amino-acid polypeptide reads, in one-letter code: Small ribosomal subunit protein uS4 (206 aa).

Residues 96–156 enclose the S4 RNA-binding domain; the sequence is TRLDNVVYRM…EKSQKQARIK (61 aa).

The protein belongs to the universal ribosomal protein uS4 family. Part of the 30S ribosomal subunit. Contacts protein S5. The interaction surface between S4 and S5 is involved in control of translational fidelity.

In terms of biological role, one of the primary rRNA binding proteins, it binds directly to 16S rRNA where it nucleates assembly of the body of the 30S subunit. With S5 and S12 plays an important role in translational accuracy. The polypeptide is Small ribosomal subunit protein uS4 (Shewanella loihica (strain ATCC BAA-1088 / PV-4)).